The following is a 337-amino-acid chain: Ornithine carbamoyltransferase, catabolic (337 aa).

Carbamoyl phosphate-binding positions include 57-60 (STRT), glutamine 84, arginine 108, and 135-138 (HPTQ). Residues asparagine 167, aspartate 231, and 235 to 236 (SM) each bind L-ornithine. Carbamoyl phosphate contacts are provided by residues 272-273 (CL) and arginine 317.

This sequence belongs to the aspartate/ornithine carbamoyltransferase superfamily. OTCase family.

The protein resides in the cytoplasm. The catalysed reaction is carbamoyl phosphate + L-ornithine = L-citrulline + phosphate + H(+). It participates in amino-acid degradation; L-arginine degradation via ADI pathway; carbamoyl phosphate from L-arginine: step 2/2. Reversibly catalyzes the transfer of the carbamoyl group from carbamoyl phosphate (CP) to the N(epsilon) atom of ornithine (ORN) to produce L-citrulline. The polypeptide is Ornithine carbamoyltransferase, catabolic (arcB) (Streptococcus agalactiae).